Here is a 406-residue protein sequence, read N- to C-terminus: NIPA-like protein 3 (406 aa).

4 helical membrane-spanning segments follow: residues 33–53 (NLIG…ALNL), 76–96 (WWLG…SYAF), 101–121 (LIVP…IIFI), and 135–155 (VLSF…VTFA). N166 carries N-linked (GlcNAc...) asparagine glycosylation. A run of 5 helical transmembrane segments spans residues 171 to 191 (LVSW…CLLL), 202 to 222 (IVVI…TVKA), 240 to 260 (PIFY…AAFL), 271 to 291 (LIAS…GAIF), and 300 to 320 (VLHI…VFLI). Position 372 is a phosphoserine (S372).

Belongs to the NIPA family.

The protein localises to the membrane. The chain is NIPA-like protein 3 (NIPAL3) from Homo sapiens (Human).